Here is a 324-residue protein sequence, read N- to C-terminus: MKLIIALAALIVVINAASDQELWADFKKTHARTYKSLREEKLRFNIFQDTLRQIAEHNVKYENGESTYYLAINKFSDITDEEFRDMLMKNEASRPNLEGLEVADLTVGAAPESIDWRSKGVVLPVRNQGECGSCWALSTAAAIESQSAIKSGSKVPLSPQQLVDCSTSYGNHGCNGGFAVNGFEYVKDNGLESDADYPYSGKEDKCKANDKSRSVVELTGYKKVTASETSLKEAVGTIGPISAVVFGKPMKSYGGGIFDDSSCLGDNLHHGVNVVGYGIENGQKYWIIKNTWGADWGESGYIRLIRDTDHSCGVEKMASYPILA.

A signal peptide spans 1–16 (MKLIIALAALIVVINA). 3 cysteine pairs are disulfide-bonded: cysteine 131-cysteine 174, cysteine 165-cysteine 206, and cysteine 263-cysteine 312. Cysteine 134 is an active-site residue. Active-site residues include histidine 270 and asparagine 290.

It belongs to the peptidase C1 family. As to expression, expressed in larval carcasses and gut, and adult gut.

The polypeptide is Cathepsin L-like proteinase (Phaedon cochleariae (Mustard beetle)).